Reading from the N-terminus, the 206-residue chain is Phosphoribosylglycinamide formyltransferase (206 aa).

Gly13 to Asn15 provides a ligand contact to N(1)-(5-phospho-beta-D-ribosyl)glycinamide. (6R)-10-formyltetrahydrofolate contacts are provided by residues Met99–Leu102 and Asn121. The Proton donor role is filled by His123. Residue Asp163 coordinates (6R)-10-formyltetrahydrofolate. Residue Glu192 participates in N(1)-(5-phospho-beta-D-ribosyl)glycinamide binding.

It belongs to the GART family.

The catalysed reaction is N(1)-(5-phospho-beta-D-ribosyl)glycinamide + (6R)-10-formyltetrahydrofolate = N(2)-formyl-N(1)-(5-phospho-beta-D-ribosyl)glycinamide + (6S)-5,6,7,8-tetrahydrofolate + H(+). Its pathway is purine metabolism; IMP biosynthesis via de novo pathway; N(2)-formyl-N(1)-(5-phospho-D-ribosyl)glycinamide from N(1)-(5-phospho-D-ribosyl)glycinamide (10-formyl THF route): step 1/1. The chain is Phosphoribosylglycinamide formyltransferase (purN) from Dictyostelium discoideum (Social amoeba).